A 276-amino-acid polypeptide reads, in one-letter code: Cerberus (276 aa).

An N-terminal signal peptide occupies residues M1–G20. 3 N-linked (GlcNAc...) asparagine glycosylation sites follow: N103, N118, and N160. 4 disulfide bridges follow: C175/C221, C189/C235, C199/C251, and C203/C253. One can recognise a CTCK domain in the interval C175–N259. A glycan (N-linked (GlcNAc...) asparagine) is linked at N234.

The protein belongs to the DAN family. The long chain interacts with nodal/nr-1, bmp4 and wnt8, thereby inhibiting their function. The short chain interacts with nodal/nr-1 but not bmp4 or wnt8. Expressed in the anterior endomesoderm of the early gastrula with expression expanded laterally around the margin at the endoderm/mesoderm boundary.

The protein localises to the secreted. Inhibits wnt, nodal/nr-1 and bmp signaling in the embryo to promote head formation and anterior neural induction. Within the endoderm, acts as an essential mediator of nodal/nr-1-induced cardiogenesis in the overlying mesoderm. This is Cerberus from Xenopus tropicalis (Western clawed frog).